The chain runs to 629 residues: Phosphomethylpyrimidine synthase (629 aa).

Residues 1–24 (MSTKPKNAAHLSESAQVDSGSVQP) are disordered. A compositionally biased stretch (polar residues) spans 13–24 (ESAQVDSGSVQP). Substrate-binding positions include asparagine 233, methionine 262, tyrosine 291, histidine 327, 347-349 (SRG), 388-391 (DGLR), and glutamate 427. Residue histidine 431 coordinates Zn(2+). Tyrosine 454 contributes to the substrate binding site. Histidine 495 contributes to the Zn(2+) binding site. 3 residues coordinate [4Fe-4S] cluster: cysteine 575, cysteine 578, and cysteine 583.

It belongs to the ThiC family. Homodimer. [4Fe-4S] cluster is required as a cofactor.

It carries out the reaction 5-amino-1-(5-phospho-beta-D-ribosyl)imidazole + S-adenosyl-L-methionine = 4-amino-2-methyl-5-(phosphooxymethyl)pyrimidine + CO + 5'-deoxyadenosine + formate + L-methionine + 3 H(+). Its pathway is cofactor biosynthesis; thiamine diphosphate biosynthesis. In terms of biological role, catalyzes the synthesis of the hydroxymethylpyrimidine phosphate (HMP-P) moiety of thiamine from aminoimidazole ribotide (AIR) in a radical S-adenosyl-L-methionine (SAM)-dependent reaction. In Pseudomonas syringae pv. tomato (strain ATCC BAA-871 / DC3000), this protein is Phosphomethylpyrimidine synthase.